Consider the following 332-residue polypeptide: 6-phosphogluconolactonase (332 aa).

The protein belongs to the cycloisomerase 2 family.

It catalyses the reaction 6-phospho-D-glucono-1,5-lactone + H2O = 6-phospho-D-gluconate + H(+). It participates in carbohydrate degradation; pentose phosphate pathway; D-ribulose 5-phosphate from D-glucose 6-phosphate (oxidative stage): step 2/3. In terms of biological role, catalyzes the hydrolysis of 6-phosphogluconolactone to 6-phosphogluconate. The protein is 6-phosphogluconolactonase of Pectobacterium atrosepticum (strain SCRI 1043 / ATCC BAA-672) (Erwinia carotovora subsp. atroseptica).